We begin with the raw amino-acid sequence, 1207 residues long: DNA-directed RNA polymerase subunit beta' (1207 aa).

Residues Cys-60, Cys-62, Cys-75, and Cys-78 each coordinate Zn(2+). Mg(2+) is bound by residues Asp-450, Asp-452, and Asp-454. Residues Cys-818, Cys-892, Cys-899, and Cys-902 each coordinate Zn(2+).

This sequence belongs to the RNA polymerase beta' chain family. The RNAP catalytic core consists of 2 alpha, 1 beta, 1 beta' and 1 omega subunit. When a sigma factor is associated with the core the holoenzyme is formed, which can initiate transcription. Requires Mg(2+) as cofactor. Zn(2+) serves as cofactor.

The catalysed reaction is RNA(n) + a ribonucleoside 5'-triphosphate = RNA(n+1) + diphosphate. Its function is as follows. DNA-dependent RNA polymerase catalyzes the transcription of DNA into RNA using the four ribonucleoside triphosphates as substrates. In Lactococcus lactis subsp. lactis (strain IL1403) (Streptococcus lactis), this protein is DNA-directed RNA polymerase subunit beta'.